The sequence spans 193 residues: Peptide deformylase (193 aa).

Fe cation is bound by residues cysteine 111 and histidine 155. Glutamate 156 is an active-site residue. Histidine 159 contacts Fe cation.

It belongs to the polypeptide deformylase family. Fe(2+) serves as cofactor.

It carries out the reaction N-terminal N-formyl-L-methionyl-[peptide] + H2O = N-terminal L-methionyl-[peptide] + formate. Its function is as follows. Removes the formyl group from the N-terminal Met of newly synthesized proteins. Requires at least a dipeptide for an efficient rate of reaction. N-terminal L-methionine is a prerequisite for activity but the enzyme has broad specificity at other positions. The protein is Peptide deformylase of Mycoplasma genitalium (strain ATCC 33530 / DSM 19775 / NCTC 10195 / G37) (Mycoplasmoides genitalium).